The chain runs to 103 residues: Pyrimidine/purine nucleoside phosphorylase (103 aa).

This sequence belongs to the nucleoside phosphorylase PpnP family.

It carries out the reaction a purine D-ribonucleoside + phosphate = a purine nucleobase + alpha-D-ribose 1-phosphate. The catalysed reaction is adenosine + phosphate = alpha-D-ribose 1-phosphate + adenine. The enzyme catalyses cytidine + phosphate = cytosine + alpha-D-ribose 1-phosphate. It catalyses the reaction guanosine + phosphate = alpha-D-ribose 1-phosphate + guanine. It carries out the reaction inosine + phosphate = alpha-D-ribose 1-phosphate + hypoxanthine. The catalysed reaction is thymidine + phosphate = 2-deoxy-alpha-D-ribose 1-phosphate + thymine. The enzyme catalyses uridine + phosphate = alpha-D-ribose 1-phosphate + uracil. It catalyses the reaction xanthosine + phosphate = alpha-D-ribose 1-phosphate + xanthine. Catalyzes the phosphorolysis of diverse nucleosides, yielding D-ribose 1-phosphate and the respective free bases. Can use uridine, adenosine, guanosine, cytidine, thymidine, inosine and xanthosine as substrates. Also catalyzes the reverse reactions. This Nocardia farcinica (strain IFM 10152) protein is Pyrimidine/purine nucleoside phosphorylase.